A 342-amino-acid polypeptide reads, in one-letter code: UDP-3-O-(3-hydroxymyristoyl)glucosamine N-acyltransferase (342 aa).

Residue H239 is the Proton acceptor of the active site.

Belongs to the transferase hexapeptide repeat family. LpxD subfamily. In terms of assembly, homotrimer.

The enzyme catalyses a UDP-3-O-[(3R)-3-hydroxyacyl]-alpha-D-glucosamine + a (3R)-hydroxyacyl-[ACP] = a UDP-2-N,3-O-bis[(3R)-3-hydroxyacyl]-alpha-D-glucosamine + holo-[ACP] + H(+). The catalysed reaction is UDP-3-O-[(3R)-3-hydroxytetradecanoyl]-alpha-D-glucosamine + (3R)-hydroxytetradecanoyl-[ACP] = UDP-2-N,3-O-bis[(3R)-3-hydroxytetradecanoyl]-alpha-D-glucosamine + holo-[ACP] + H(+). It participates in glycolipid biosynthesis; lipid IV(A) biosynthesis; lipid IV(A) from (3R)-3-hydroxytetradecanoyl-[acyl-carrier-protein] and UDP-N-acetyl-alpha-D-glucosamine: step 3/6. Functionally, catalyzes the N-acylation of UDP-3-O-(hydroxytetradecanoyl)glucosamine using 3-hydroxytetradecanoyl-ACP as the acyl donor. Is involved in the biosynthesis of lipid A, a phosphorylated glycolipid that anchors the lipopolysaccharide to the outer membrane of the cell. The chain is UDP-3-O-(3-hydroxymyristoyl)glucosamine N-acyltransferase from Photorhabdus laumondii subsp. laumondii (strain DSM 15139 / CIP 105565 / TT01) (Photorhabdus luminescens subsp. laumondii).